The following is a 202-amino-acid chain: Methylthioribulose-1-phosphate dehydratase (202 aa).

Zn(2+) contacts are provided by histidine 93 and histidine 95.

The protein belongs to the aldolase class II family. MtnB subfamily. Requires Zn(2+) as cofactor.

The enzyme catalyses 5-(methylsulfanyl)-D-ribulose 1-phosphate = 5-methylsulfanyl-2,3-dioxopentyl phosphate + H2O. It participates in amino-acid biosynthesis; L-methionine biosynthesis via salvage pathway; L-methionine from S-methyl-5-thio-alpha-D-ribose 1-phosphate: step 2/6. Catalyzes the dehydration of methylthioribulose-1-phosphate (MTRu-1-P) into 2,3-diketo-5-methylthiopentyl-1-phosphate (DK-MTP-1-P). The protein is Methylthioribulose-1-phosphate dehydratase of Klebsiella pneumoniae subsp. pneumoniae (strain ATCC 700721 / MGH 78578).